The chain runs to 469 residues: UDP-N-acetylmuramate--L-alanine ligase (469 aa).

ATP is bound at residue 113–119 (GTHGKTT).

It belongs to the MurCDEF family.

It localises to the cytoplasm. It carries out the reaction UDP-N-acetyl-alpha-D-muramate + L-alanine + ATP = UDP-N-acetyl-alpha-D-muramoyl-L-alanine + ADP + phosphate + H(+). The protein operates within cell wall biogenesis; peptidoglycan biosynthesis. Its function is as follows. Cell wall formation. This Neisseria meningitidis serogroup C / serotype 2a (strain ATCC 700532 / DSM 15464 / FAM18) protein is UDP-N-acetylmuramate--L-alanine ligase.